The sequence spans 217 residues: Large ribosomal subunit protein uL3 (217 aa).

The segment at 134–154 is disordered; that stretch reads DATHGNSLSHRAPGSIGQCQT. N5-methylglutamine is present on glutamine 153.

This sequence belongs to the universal ribosomal protein uL3 family. As to quaternary structure, part of the 50S ribosomal subunit. Forms a cluster with proteins L14 and L19. Post-translationally, methylated by PrmB.

Its function is as follows. One of the primary rRNA binding proteins, it binds directly near the 3'-end of the 23S rRNA, where it nucleates assembly of the 50S subunit. In Coxiella burnetii (strain Dugway 5J108-111), this protein is Large ribosomal subunit protein uL3.